Reading from the N-terminus, the 388-residue chain is Succinate--CoA ligase [ADP-forming] subunit beta (388 aa).

The 236-residue stretch at 9–244 (KQLFAEYGLP…PSQEDSREAE (236 aa)) folds into the ATP-grasp domain. ATP-binding positions include K46, 53 to 55 (GRG), E99, T102, and E107. Mg(2+) contacts are provided by N199 and D213. Residues N264 and 321-323 (GIV) each bind substrate.

Belongs to the succinate/malate CoA ligase beta subunit family. As to quaternary structure, heterotetramer of two alpha and two beta subunits. Mg(2+) is required as a cofactor.

It carries out the reaction succinate + ATP + CoA = succinyl-CoA + ADP + phosphate. The enzyme catalyses GTP + succinate + CoA = succinyl-CoA + GDP + phosphate. The protein operates within carbohydrate metabolism; tricarboxylic acid cycle; succinate from succinyl-CoA (ligase route): step 1/1. Succinyl-CoA synthetase functions in the citric acid cycle (TCA), coupling the hydrolysis of succinyl-CoA to the synthesis of either ATP or GTP and thus represents the only step of substrate-level phosphorylation in the TCA. The beta subunit provides nucleotide specificity of the enzyme and binds the substrate succinate, while the binding sites for coenzyme A and phosphate are found in the alpha subunit. The chain is Succinate--CoA ligase [ADP-forming] subunit beta from Marinobacter nauticus (strain ATCC 700491 / DSM 11845 / VT8) (Marinobacter aquaeolei).